The sequence spans 70 residues: Protein SlyX homolog (70 aa).

It belongs to the SlyX family.

This Agrobacterium fabrum (strain C58 / ATCC 33970) (Agrobacterium tumefaciens (strain C58)) protein is Protein SlyX homolog.